A 280-amino-acid chain; its full sequence is Adenosylcobinamide-GDP ribazoletransferase (280 aa).

Helical transmembrane passes span G44–L64, S69–F89, L111–L131, V135–V155, I189–I209, and A226–A246.

Belongs to the CobS family. Requires Mg(2+) as cofactor.

It is found in the cell inner membrane. The catalysed reaction is alpha-ribazole + adenosylcob(III)inamide-GDP = adenosylcob(III)alamin + GMP + H(+). It carries out the reaction alpha-ribazole 5'-phosphate + adenosylcob(III)inamide-GDP = adenosylcob(III)alamin 5'-phosphate + GMP + H(+). It functions in the pathway cofactor biosynthesis; adenosylcobalamin biosynthesis; adenosylcobalamin from cob(II)yrinate a,c-diamide: step 7/7. Its function is as follows. Joins adenosylcobinamide-GDP and alpha-ribazole to generate adenosylcobalamin (Ado-cobalamin). Also synthesizes adenosylcobalamin 5'-phosphate from adenosylcobinamide-GDP and alpha-ribazole 5'-phosphate. The sequence is that of Adenosylcobinamide-GDP ribazoletransferase from Albidiferax ferrireducens (strain ATCC BAA-621 / DSM 15236 / T118) (Rhodoferax ferrireducens).